A 176-amino-acid polypeptide reads, in one-letter code: Peptide methionine sulfoxide reductase MsrA (176 aa).

Residue cysteine 12 is part of the active site.

This sequence belongs to the MsrA Met sulfoxide reductase family.

It catalyses the reaction L-methionyl-[protein] + [thioredoxin]-disulfide + H2O = L-methionyl-(S)-S-oxide-[protein] + [thioredoxin]-dithiol. The enzyme catalyses [thioredoxin]-disulfide + L-methionine + H2O = L-methionine (S)-S-oxide + [thioredoxin]-dithiol. Functionally, has an important function as a repair enzyme for proteins that have been inactivated by oxidation. Catalyzes the reversible oxidation-reduction of methionine sulfoxide in proteins to methionine. The sequence is that of Peptide methionine sulfoxide reductase MsrA from Thermus thermophilus (strain ATCC BAA-163 / DSM 7039 / HB27).